We begin with the raw amino-acid sequence, 252 residues long: Redox-sensing transcriptional repressor Rex (252 aa).

A DNA-binding region (H-T-H motif) is located at residues 26-65 (LYLRALTALSERSVPTVSSEELAAAAGVNSAKLRKDFSYL). Position 100–105 (100–105 (GIGNLG)) interacts with NAD(+). Residues 222-252 (EAAAEGAIPAAASKESADKGPDGDVPAVMPA) form a disordered region.

Belongs to the transcriptional regulatory Rex family. In terms of assembly, homodimer.

Its subcellular location is the cytoplasm. Functionally, modulates transcription in response to changes in cellular NADH/NAD(+) redox state. This chain is Redox-sensing transcriptional repressor Rex, found in Streptomyces avermitilis (strain ATCC 31267 / DSM 46492 / JCM 5070 / NBRC 14893 / NCIMB 12804 / NRRL 8165 / MA-4680).